Here is a 247-residue protein sequence, read N- to C-terminus: Probable dihydroorotate dehydrogenase B (NAD(+)), electron transfer subunit (247 aa).

The 87-residue stretch at 1 to 87 (MLRRVSIEET…RGPYGHGFSG (87 aa)) folds into the FAD-binding FR-type domain. The [2Fe-2S] cluster site is built by cysteine 201, cysteine 206, cysteine 209, and cysteine 217.

It belongs to the PyrK family. As to quaternary structure, heterotetramer of 2 PyrK and 2 PyrD type B subunits. [2Fe-2S] cluster is required as a cofactor. It depends on FAD as a cofactor.

The protein operates within pyrimidine metabolism; UMP biosynthesis via de novo pathway; orotate from (S)-dihydroorotate (NAD(+) route): step 1/1. In terms of biological role, responsible for channeling the electrons from the oxidation of dihydroorotate from the FMN redox center in the PyrD type B subunit to the ultimate electron acceptor NAD(+). This chain is Probable dihydroorotate dehydrogenase B (NAD(+)), electron transfer subunit, found in Pyrococcus furiosus (strain ATCC 43587 / DSM 3638 / JCM 8422 / Vc1).